Here is a 217-residue protein sequence, read N- to C-terminus: Adenylate kinase (217 aa).

Residue 10-15 coordinates ATP; sequence GAGKGT. An NMP region spans residues 30–59; sequence STGDIFRSNVSQGTPLGVQAKRYMDAGELV. AMP is bound by residues T31, R36, 57–59, 85–88, and Q92; these read ELV and GFPR. The LID stretch occupies residues 126-163; that stretch reads GRRTCRGCGKVWHVEFDAPSQEGRCDRCGAELFQRDDD. R127 is a binding site for ATP. C130, C133, C150, and C153 together coordinate Zn(2+). 2 residues coordinate AMP: R160 and R171. G199 provides a ligand contact to ATP.

This sequence belongs to the adenylate kinase family. As to quaternary structure, monomer.

The protein resides in the cytoplasm. The enzyme catalyses AMP + ATP = 2 ADP. It functions in the pathway purine metabolism; AMP biosynthesis via salvage pathway; AMP from ADP: step 1/1. Functionally, catalyzes the reversible transfer of the terminal phosphate group between ATP and AMP. Plays an important role in cellular energy homeostasis and in adenine nucleotide metabolism. The chain is Adenylate kinase from Salinispora tropica (strain ATCC BAA-916 / DSM 44818 / JCM 13857 / NBRC 105044 / CNB-440).